A 410-amino-acid polypeptide reads, in one-letter code: MGERFFRNEMPEFVPEDLSGEEETVTECKDSLTKLLSLPYKSFSEKLHRYALSIKDKVVWETWERSGKRVRDYNLYTGVLGTAYLLFKSYQVTRNEDDLKLCLENVEACDVASRDSERVTFICGYAGVCALGAVAAKCLGDDQLYDRYLARFRGIRLPSDLPYELLYGRAGYLWACLFLNKHIGQESISSERMRSVVEEIFRAGRQLGNKGTCPLMYEWHGKRYWGAAHGLAGIMNVLMHTELEPDEIKDVKGTLSYMIQNRFPSGNYLSSEGSKSDRLVHWCHGAPGVALTLVKAAQVYNTKEFVEAAMEAGEVVWSRGLLKRVGICHGISGNTYVFLSLYRLTRNPKYLYRAKAFASFLLDKSEKLISEGQMHGGDRPFSLFEGIGGMAYMLLDMNDPTQALFPGYEL.

Zn(2+) is bound by residues Cys283, Cys328, and His329.

The protein belongs to the LanC-like protein family. May interact (via C-terminus) with GPA1.

May play a role in abscisic acid (ABA) signaling. In Arabidopsis thaliana (Mouse-ear cress), this protein is LanC-like protein GCR2 (GCR2).